Here is a 556-residue protein sequence, read N- to C-terminus: Endonuclease/exonuclease/phosphatase family domain-containing protein 1 (556 aa).

The HhH domain maps to Glu39–Tyr68.

The protein is Endonuclease/exonuclease/phosphatase family domain-containing protein 1 (eepd1) of Xenopus laevis (African clawed frog).